The sequence spans 314 residues: tRNA dimethylallyltransferase (314 aa).

Glycine 11–threonine 18 is an ATP binding site. Threonine 13–threonine 18 contacts substrate. Interaction with substrate tRNA stretches follow at residues aspartate 36–leucine 39, glutamine 160–arginine 164, arginine 241–arginine 246, and lysine 274–arginine 281.

Belongs to the IPP transferase family. As to quaternary structure, monomer. The cofactor is Mg(2+).

It carries out the reaction adenosine(37) in tRNA + dimethylallyl diphosphate = N(6)-dimethylallyladenosine(37) in tRNA + diphosphate. Its function is as follows. Catalyzes the transfer of a dimethylallyl group onto the adenine at position 37 in tRNAs that read codons beginning with uridine, leading to the formation of N6-(dimethylallyl)adenosine (i(6)A). The protein is tRNA dimethylallyltransferase of Glaesserella parasuis serovar 5 (strain SH0165) (Haemophilus parasuis).